Here is a 1408-residue protein sequence, read N- to C-terminus: DNA-directed RNA polymerase subunit beta' (1408 aa).

Zn(2+) contacts are provided by Cys-70, Cys-72, Cys-85, and Cys-88. Positions 458, 460, and 462 each coordinate Mg(2+). Zn(2+) is bound by residues Cys-813, Cys-887, Cys-894, and Cys-897. Residues 1387 to 1408 (AELEAATATAPADAGGDSPATE) form a disordered region. Low complexity predominate over residues 1389–1408 (LEAATATAPADAGGDSPATE).

The protein belongs to the RNA polymerase beta' chain family. As to quaternary structure, the RNAP catalytic core consists of 2 alpha, 1 beta, 1 beta' and 1 omega subunit. When a sigma factor is associated with the core the holoenzyme is formed, which can initiate transcription. The cofactor is Mg(2+). Requires Zn(2+) as cofactor.

It carries out the reaction RNA(n) + a ribonucleoside 5'-triphosphate = RNA(n+1) + diphosphate. DNA-dependent RNA polymerase catalyzes the transcription of DNA into RNA using the four ribonucleoside triphosphates as substrates. This chain is DNA-directed RNA polymerase subunit beta', found in Polaromonas sp. (strain JS666 / ATCC BAA-500).